The chain runs to 245 residues: 6-carboxyhexanoate--CoA ligase (245 aa).

This sequence belongs to the BioW family. In terms of assembly, homodimer. Mg(2+) is required as a cofactor.

It carries out the reaction heptanedioate + ATP + CoA = 6-carboxyhexanoyl-CoA + AMP + diphosphate. The protein operates within metabolic intermediate metabolism; pimeloyl-CoA biosynthesis; pimeloyl-CoA from pimelate: step 1/1. Catalyzes the transformation of pimelate into pimeloyl-CoA with concomitant hydrolysis of ATP to AMP. This Sulfurihydrogenibium sp. (strain YO3AOP1) protein is 6-carboxyhexanoate--CoA ligase.